Here is a 431-residue protein sequence, read N- to C-terminus: Histidinol dehydrogenase (431 aa).

NAD(+) contacts are provided by Tyr-127, Gln-189, and Asn-212. Substrate contacts are provided by Ser-237, Gln-259, and His-262. Residues Gln-259 and His-262 each coordinate Zn(2+). Residues Glu-326 and His-327 each act as proton acceptor in the active site. Residues His-327, Asp-360, Glu-414, and His-419 each coordinate substrate. Asp-360 provides a ligand contact to Zn(2+). His-419 is a binding site for Zn(2+).

This sequence belongs to the histidinol dehydrogenase family. Zn(2+) serves as cofactor.

The catalysed reaction is L-histidinol + 2 NAD(+) + H2O = L-histidine + 2 NADH + 3 H(+). It functions in the pathway amino-acid biosynthesis; L-histidine biosynthesis; L-histidine from 5-phospho-alpha-D-ribose 1-diphosphate: step 9/9. Its function is as follows. Catalyzes the sequential NAD-dependent oxidations of L-histidinol to L-histidinaldehyde and then to L-histidine. This Xanthomonas campestris pv. campestris (strain ATCC 33913 / DSM 3586 / NCPPB 528 / LMG 568 / P 25) protein is Histidinol dehydrogenase.